We begin with the raw amino-acid sequence, 111 residues long: Putative lipid-binding protein AIR1 (111 aa).

Positions 1 to 23 (MAPRTPLALFVSLNLLFFTYTSA) are cleaved as a signal peptide. 3 disulfide bridges follow: Cys28/Cys58, Cys38/Cys57, and Cys74/Cys110.

This sequence belongs to the plant LTP family. PEARLI1 subfamily.

The protein localises to the secreted. The polypeptide is Putative lipid-binding protein AIR1 (AIR1) (Arabidopsis thaliana (Mouse-ear cress)).